Reading from the N-terminus, the 145-residue chain is Large ribosomal subunit protein uL13 (145 aa).

This sequence belongs to the universal ribosomal protein uL13 family. As to quaternary structure, part of the 50S ribosomal subunit.

In terms of biological role, this protein is one of the early assembly proteins of the 50S ribosomal subunit, although it is not seen to bind rRNA by itself. It is important during the early stages of 50S assembly. This is Large ribosomal subunit protein uL13 from Bacillus thuringiensis (strain Al Hakam).